Consider the following 550-residue polypeptide: Hydroxylamine reductase (550 aa).

Residues C3, C6, C18, and C25 each contribute to the [2Fe-2S] cluster site. Hybrid [4Fe-2O-2S] cluster is bound by residues H249, E273, C317, C405, C433, C458, E492, and K494. C405 is modified (cysteine persulfide).

It belongs to the HCP family. It depends on [2Fe-2S] cluster as a cofactor. The cofactor is hybrid [4Fe-2O-2S] cluster.

It localises to the cytoplasm. It carries out the reaction A + NH4(+) + H2O = hydroxylamine + AH2 + H(+). Its function is as follows. Catalyzes the reduction of hydroxylamine to form NH(3) and H(2)O. The protein is Hydroxylamine reductase of Yersinia pseudotuberculosis serotype O:1b (strain IP 31758).